A 190-amino-acid polypeptide reads, in one-letter code: Tereporin-Ca1 (190 aa).

The segment at 2-21 (TAGSSLAGTTLSGLAASGYR) is N-terminal region. Phosphocholine-binding residues include Gly-78, Ser-96, Pro-98, Tyr-131, and Tyr-132. The Cell attachment site, crucial for protein stability motif lies at 138 to 140 (KGE).

Belongs to the actinoporin family. Conoidea subfamily. In terms of assembly, octamer or nonamer in membranes. Monomer in the soluble state. Expressed by the venom duct.

It localises to the secreted. The protein localises to the nematocyst. The protein resides in the target cell membrane. In terms of biological role, pore-forming protein that forms pores of around 1 nm and causes cardiac stimulation and cytolysis. The protein is Tereporin-Ca1 of Terebra anilis (Auger snail).